The primary structure comprises 658 residues: Non-reducing end beta-L-arabinofuranosidase (658 aa).

Beta-L-arabinofuranose-binding positions include His142, 192–194 (DGH), His270, and Glu322. Catalysis depends on Glu322, which acts as the Proton donor/acceptor. Residues Glu338, Cys340, Cys417, and Cys418 each coordinate Zn(2+). Cys417 (nucleophile; S-glycosyl-cysteine intermediate) is an active-site residue.

It belongs to the glycosyl hydrolase 127 family. In terms of assembly, homodimer in solution. Zn(2+) is required as a cofactor.

The catalysed reaction is beta-L-arabinofuranosyl-(1-&gt;2)-beta-L-arabinofuranose + H2O = 2 beta-L-arabinofuranose. With respect to regulation, strongly inhibited in the presence of thiol modifiers, suggesting a crucial role for cysteine residues in catalysis. Slightly inhibited by EDTA. Functionally, beta-L-arabinofuranosidase that removes the beta-L-arabinofuranose residue from the non-reducing end of various substrates, including beta-L-arabinofuranosyl-hydroxyproline (Ara-Hyp), Ara-beta-1,2-Ara-beta-Hyp (Ara(2)-Hyp), Ara-beta-1,2-Ara-beta-1,2-Ara-beta-Hyp (Ara(3)-Hyp), and beta-L-arabinofuranosyl-(1-&gt;2)-1-O-methyl-beta-L-arabinofuranose. In the presence of 1-alkanols, shows transglycosylation activity, retaining the anomeric configuration of the arabinofuranose residue. The polypeptide is Non-reducing end beta-L-arabinofuranosidase (Bifidobacterium longum subsp. longum (strain ATCC 15707 / DSM 20219 / JCM 1217 / NCTC 11818 / E194b)).